A 250-amino-acid chain; its full sequence is Endonuclease NucS (250 aa).

It belongs to the NucS endonuclease family.

The protein localises to the cytoplasm. Cleaves both 3' and 5' ssDNA extremities of branched DNA structures. The chain is Endonuclease NucS from Sulfolobus acidocaldarius (strain ATCC 33909 / DSM 639 / JCM 8929 / NBRC 15157 / NCIMB 11770).